The chain runs to 116 residues: Protein Rev (116 aa).

Phosphoserine; by host CK2 occurs at positions 5 and 8. Positions 18 to 26 (IIKHLYQSN) are homomultimerization. The interval 20-48 (KHLYQSNPPPKPEGTRQARRNRRRRWRER) is disordered. Residues 34-50 (TRQARRNRRRRWRERQR) carry the Nuclear localization signal and RNA-binding (RRE) motif. The segment covering 36–48 (QARRNRRRRWRER) has biased composition (basic residues). The Nuclear export signal and binding to XPO1 signature appears at 73 to 84 (LQLPPLERLTLD). Positions 91–116 (TSGTQGVGSPQILVESPAVLESGTKE) are disordered. A phosphoserine; by host mark is found at Ser92 and Ser99.

This sequence belongs to the HIV-1 REV protein family. Homomultimer; when bound to the RRE. Multimeric assembly is essential for activity and may involve XPO1. Binds to human KPNB1, XPO1, TNPO1, RANBP5 and IPO7. Interacts with the viral Integrase. Interacts with human KHDRBS1. Interacts with human NAP1; this interaction decreases Rev multimerization and stimulates its activity. Interacts with human DEAD-box helicases DDX3 and DDX24; these interactions may serve for viral RNA export to the cytoplasm and packaging, respectively. Interacts with human PSIP1; this interaction may inhibit HIV-1 DNA integration by promoting dissociation of the Integrase-LEDGF/p75 complex. Post-translationally, asymmetrically arginine dimethylated at one site by host PRMT6. Methylation impairs the RNA-binding activity and export of viral RNA from the nucleus to the cytoplasm. Phosphorylated by protein kinase CK2. Presence of, and maybe binding to the N-terminus of the regulatory beta subunit of CK2 is necessary for CK2-mediated Rev's phosphorylation.

It is found in the host nucleus. The protein resides in the host nucleolus. Its subcellular location is the host cytoplasm. Its function is as follows. Escorts unspliced or incompletely spliced viral pre-mRNAs (late transcripts) out of the nucleus of infected cells. These pre-mRNAs carry a recognition sequence called Rev responsive element (RRE) located in the env gene, that is not present in fully spliced viral mRNAs (early transcripts). This function is essential since most viral proteins are translated from unspliced or partially spliced pre-mRNAs which cannot exit the nucleus by the pathway used by fully processed cellular mRNAs. Rev itself is translated from a fully spliced mRNA that readily exits the nucleus. Rev's nuclear localization signal (NLS) binds directly to KPNB1/Importin beta-1 without previous binding to KPNA1/Importin alpha-1. KPNB1 binds to the GDP bound form of RAN (Ran-GDP) and targets Rev to the nucleus. In the nucleus, the conversion from Ran-GDP to Ran-GTP dissociates Rev from KPNB1 and allows Rev's binding to the RRE in viral pre-mRNAs. Rev multimerization on the RRE via cooperative assembly exposes its nuclear export signal (NES) to the surface. Rev can then form a complex with XPO1/CRM1 and Ran-GTP, leading to nuclear export of the complex. Conversion from Ran-GTP to Ran-GDP mediates dissociation of the Rev/RRE/XPO1/RAN complex, so that Rev can return to the nucleus for a subsequent round of export. Beside KPNB1, also seems to interact with TNPO1/Transportin-1, RANBP5/IPO5 and IPO7/RANBP7 for nuclear import. The nucleoporin-like HRB/RIP is an essential cofactor that probably indirectly interacts with Rev to release HIV RNAs from the perinuclear region to the cytoplasm. The protein is Protein Rev of Human immunodeficiency virus type 1 group M subtype B (isolate CDC-451) (HIV-1).